The primary structure comprises 223 residues: ATP-dependent dethiobiotin synthetase BioD (223 aa).

Residue Thr-16 participates in Mg(2+) binding. Lys-37 is a catalytic residue. Ser-41 contributes to the substrate binding site. Mg(2+) contacts are provided by Asp-50 and Glu-111. ATP is bound by residues Asp-50, 111 to 114 (EGAG), and 171 to 172 (NR).

The protein belongs to the dethiobiotin synthetase family. In terms of assembly, homodimer. Mg(2+) is required as a cofactor.

Its subcellular location is the cytoplasm. The enzyme catalyses (7R,8S)-7,8-diammoniononanoate + CO2 + ATP = (4R,5S)-dethiobiotin + ADP + phosphate + 3 H(+). It participates in cofactor biosynthesis; biotin biosynthesis; biotin from 7,8-diaminononanoate: step 1/2. Its function is as follows. Catalyzes a mechanistically unusual reaction, the ATP-dependent insertion of CO2 between the N7 and N8 nitrogen atoms of 7,8-diaminopelargonic acid (DAPA, also called 7,8-diammoniononanoate) to form a ureido ring. The sequence is that of ATP-dependent dethiobiotin synthetase BioD from Anaeromyxobacter sp. (strain K).